A 78-amino-acid chain; its full sequence is Protein SlyX homolog (78 aa).

This sequence belongs to the SlyX family.

This chain is Protein SlyX homolog, found in Xylella fastidiosa (strain M23).